The primary structure comprises 476 residues: Aspartyl/glutamyl-tRNA(Asn/Gln) amidotransferase subunit B (476 aa).

This sequence belongs to the GatB/GatE family. GatB subfamily. In terms of assembly, heterotrimer of A, B and C subunits.

It catalyses the reaction L-glutamyl-tRNA(Gln) + L-glutamine + ATP + H2O = L-glutaminyl-tRNA(Gln) + L-glutamate + ADP + phosphate + H(+). It carries out the reaction L-aspartyl-tRNA(Asn) + L-glutamine + ATP + H2O = L-asparaginyl-tRNA(Asn) + L-glutamate + ADP + phosphate + 2 H(+). Functionally, allows the formation of correctly charged Asn-tRNA(Asn) or Gln-tRNA(Gln) through the transamidation of misacylated Asp-tRNA(Asn) or Glu-tRNA(Gln) in organisms which lack either or both of asparaginyl-tRNA or glutaminyl-tRNA synthetases. The reaction takes place in the presence of glutamine and ATP through an activated phospho-Asp-tRNA(Asn) or phospho-Glu-tRNA(Gln). This chain is Aspartyl/glutamyl-tRNA(Asn/Gln) amidotransferase subunit B, found in Listeria monocytogenes serotype 4b (strain CLIP80459).